The sequence spans 132 residues: Small ribosomal subunit protein uS8 (132 aa).

This sequence belongs to the universal ribosomal protein uS8 family. In terms of assembly, part of the 30S ribosomal subunit. Contacts proteins S5 and S12.

One of the primary rRNA binding proteins, it binds directly to 16S rRNA central domain where it helps coordinate assembly of the platform of the 30S subunit. The sequence is that of Small ribosomal subunit protein uS8 from Rhizobium johnstonii (strain DSM 114642 / LMG 32736 / 3841) (Rhizobium leguminosarum bv. viciae).